The primary structure comprises 480 residues: Sialyltransferase-like protein 5 (480 aa).

At 1–17 (MARAPPPLSSLPPPPRR) the chain is on the cytoplasmic side. The signal-anchor for type II membrane protein transmembrane segment at 18–38 (PTVVLLLGLALAFCLAVLSIQ) threads the bilayer. Residues 39–480 (SSFFTAPRLA…VCVRHERSSS (442 aa)) are Lumenal-facing. 4 N-linked (GlcNAc...) asparagine glycosylation sites follow: Asn-98, Asn-130, Asn-165, and Asn-321.

This sequence belongs to the glycosyltransferase 29 family.

Its subcellular location is the golgi apparatus membrane. In terms of biological role, may possess sialyltransferase-like activity in vitro. This Oryza sativa subsp. japonica (Rice) protein is Sialyltransferase-like protein 5.